The chain runs to 413 residues: Divalent metal cation transporter MntH (413 aa).

Helical transmembrane passes span phenylalanine 19 to alanine 39, glycine 49 to methionine 69, valine 94 to isoleucine 114, leucine 122 to isoleucine 142, leucine 155 to serine 175, alanine 196 to histidine 216, valine 240 to alanine 260, alanine 287 to glycine 307, isoleucine 323 to glycine 343, isoleucine 349 to leucine 369, and leucine 393 to leucine 413.

It belongs to the NRAMP family.

The protein localises to the cell inner membrane. In terms of biological role, h(+)-stimulated, divalent metal cation uptake system. This Erwinia tasmaniensis (strain DSM 17950 / CFBP 7177 / CIP 109463 / NCPPB 4357 / Et1/99) protein is Divalent metal cation transporter MntH.